The following is a 638-amino-acid chain: 1-deoxy-D-xylulose-5-phosphate synthase (638 aa).

Thiamine diphosphate-binding positions include H76 and 117–119; that span reads AHS. D148 contributes to the Mg(2+) binding site. Thiamine diphosphate contacts are provided by residues 149–150, N177, Y287, and E369; that span reads GS. Residue N177 participates in Mg(2+) binding.

Belongs to the transketolase family. DXPS subfamily. In terms of assembly, homodimer. Mg(2+) serves as cofactor. It depends on thiamine diphosphate as a cofactor.

It carries out the reaction D-glyceraldehyde 3-phosphate + pyruvate + H(+) = 1-deoxy-D-xylulose 5-phosphate + CO2. It participates in metabolic intermediate biosynthesis; 1-deoxy-D-xylulose 5-phosphate biosynthesis; 1-deoxy-D-xylulose 5-phosphate from D-glyceraldehyde 3-phosphate and pyruvate: step 1/1. Functionally, catalyzes the acyloin condensation reaction between C atoms 2 and 3 of pyruvate and glyceraldehyde 3-phosphate to yield 1-deoxy-D-xylulose-5-phosphate (DXP). The polypeptide is 1-deoxy-D-xylulose-5-phosphate synthase (Rhodopseudomonas palustris (strain HaA2)).